A 582-amino-acid polypeptide reads, in one-letter code: Urocanate reductase (582 aa).

A signal peptide spans 1–20 (MHYKKSIIGIAVTATAIIAG). Cys-21 carries N-palmitoyl cysteine lipidation. Cys-21 carries S-diacylglycerol cysteine lipidation. At Thr-93 the chain carries FMN phosphoryl threonine. FAD-binding residues include Ala-143, Glu-162, Asn-170, Ser-171, Gly-175, Ala-176, Ala-285, and Asp-352. The active-site Proton donor is Arg-411. FAD is bound by residues His-521, Glu-550, and Ala-565.

This sequence belongs to the FAD-dependent oxidoreductase 2 family. FRD/SDH subfamily. FAD is required as a cofactor. The cofactor is FMN.

It is found in the cell membrane. The catalysed reaction is dihydrourocanate + A = urocanate + AH2. Catalyzes the two-electron reduction of urocanate to dihydrourocanate (also named imidazole propionate or deamino-histidine). The physiological electron donor is unknown; it might be the membrane-bound tetraheme cytochrome c (CymA). Enables anaerobic growth with urocanate as a sole terminal electron acceptor, and thus can provide the cells with a niche where no other bacteria can compete and survive. Is unable to reduce cinnamate and other unsaturated organic acids such as acrylic, crotonic, fumaric and orotic acids. Has no fumarate reductase or succinate dehydrogenase activity. This Shewanella oneidensis (strain ATCC 700550 / JCM 31522 / CIP 106686 / LMG 19005 / NCIMB 14063 / MR-1) protein is Urocanate reductase (urdA).